Here is a 718-residue protein sequence, read N- to C-terminus: Polyribonucleotide nucleotidyltransferase (718 aa).

Aspartate 493 and aspartate 499 together coordinate Mg(2+). The region spanning 560–619 is the KH domain; it reads PRMITIKINPEKIRDVIGKGGSVIRALTEETGTTIDISDDGVVTIASTSSEGMAEAKKRI. The S1 motif domain occupies 629–697; that stretch reads GQVYEGTVLK…EKGRVRLSAK (69 aa).

This sequence belongs to the polyribonucleotide nucleotidyltransferase family. Mg(2+) is required as a cofactor.

The protein localises to the cytoplasm. It catalyses the reaction RNA(n+1) + phosphate = RNA(n) + a ribonucleoside 5'-diphosphate. Involved in mRNA degradation. Catalyzes the phosphorolysis of single-stranded polyribonucleotides processively in the 3'- to 5'-direction. The protein is Polyribonucleotide nucleotidyltransferase of Paraburkholderia phytofirmans (strain DSM 17436 / LMG 22146 / PsJN) (Burkholderia phytofirmans).